Here is a 124-residue protein sequence, read N- to C-terminus: Large ribosomal subunit protein bL12 (124 aa).

Belongs to the bacterial ribosomal protein bL12 family. In terms of assembly, homodimer. Part of the ribosomal stalk of the 50S ribosomal subunit. Forms a multimeric L10(L12)X complex, where L10 forms an elongated spine to which 2 to 4 L12 dimers bind in a sequential fashion. Binds GTP-bound translation factors.

In terms of biological role, forms part of the ribosomal stalk which helps the ribosome interact with GTP-bound translation factors. Is thus essential for accurate translation. This chain is Large ribosomal subunit protein bL12, found in Brucella anthropi (strain ATCC 49188 / DSM 6882 / CCUG 24695 / JCM 21032 / LMG 3331 / NBRC 15819 / NCTC 12168 / Alc 37) (Ochrobactrum anthropi).